Here is a 519-residue protein sequence, read N- to C-terminus: Probable cytosol aminopeptidase (519 aa).

Mn(2+) contacts are provided by K283 and D288. The active site involves K295. The Mn(2+) site is built by D306, D365, and E367. R369 is a catalytic residue.

Belongs to the peptidase M17 family. It depends on Mn(2+) as a cofactor.

The protein localises to the cytoplasm. It carries out the reaction Release of an N-terminal amino acid, Xaa-|-Yaa-, in which Xaa is preferably Leu, but may be other amino acids including Pro although not Arg or Lys, and Yaa may be Pro. Amino acid amides and methyl esters are also readily hydrolyzed, but rates on arylamides are exceedingly low.. It catalyses the reaction Release of an N-terminal amino acid, preferentially leucine, but not glutamic or aspartic acids.. In terms of biological role, presumably involved in the processing and regular turnover of intracellular proteins. Catalyzes the removal of unsubstituted N-terminal amino acids from various peptides. The sequence is that of Probable cytosol aminopeptidase from Mycobacterium ulcerans (strain Agy99).